A 130-amino-acid polypeptide reads, in one-letter code: S-adenosylmethionine decarboxylase proenzyme (130 aa).

The active-site Schiff-base intermediate with substrate; via pyruvic acid is the serine 63. Serine 63 carries the post-translational modification Pyruvic acid (Ser); by autocatalysis. Histidine 68 acts as the Proton acceptor; for processing activity in catalysis. The active-site Proton donor; for catalytic activity is cysteine 83.

It belongs to the prokaryotic AdoMetDC family. Type 1 subfamily. In terms of assembly, heterotetramer of two alpha and two beta chains arranged as a dimer of alpha/beta heterodimers. The cofactor is pyruvate. Is synthesized initially as an inactive proenzyme. Formation of the active enzyme involves a self-maturation process in which the active site pyruvoyl group is generated from an internal serine residue via an autocatalytic post-translational modification. Two non-identical subunits are generated from the proenzyme in this reaction, and the pyruvate is formed at the N-terminus of the alpha chain, which is derived from the carboxyl end of the proenzyme. The post-translation cleavage follows an unusual pathway, termed non-hydrolytic serinolysis, in which the side chain hydroxyl group of the serine supplies its oxygen atom to form the C-terminus of the beta chain, while the remainder of the serine residue undergoes an oxidative deamination to produce ammonia and the pyruvoyl group blocking the N-terminus of the alpha chain.

The catalysed reaction is S-adenosyl-L-methionine + H(+) = S-adenosyl 3-(methylsulfanyl)propylamine + CO2. Its pathway is amine and polyamine biosynthesis; S-adenosylmethioninamine biosynthesis; S-adenosylmethioninamine from S-adenosyl-L-methionine: step 1/1. Its function is as follows. Catalyzes the decarboxylation of S-adenosylmethionine to S-adenosylmethioninamine (dcAdoMet), the propylamine donor required for the synthesis of the polyamines spermine and spermidine from the diamine putrescine. This is S-adenosylmethionine decarboxylase proenzyme from Thermosipho melanesiensis (strain DSM 12029 / CIP 104789 / BI429).